Reading from the N-terminus, the 49-residue chain is Heme exporter protein C (49 aa).

This sequence belongs to the CcmC/CycZ/HelC family.

The protein localises to the cell inner membrane. Functionally, required for the export of heme to the periplasm for the biogenesis of c-type cytochromes. This Rhizobium leguminosarum bv. viciae protein is Heme exporter protein C.